Consider the following 125-residue polypeptide: Napin-3 (125 aa).

4 disulfides stabilise this stretch: C10-C62, C23-C51, C52-C107, and C64-C115.

Belongs to the 2S seed storage albumins family. In terms of assembly, the mature protein consists of a small and a large chain linked by disulfide bonds.

The small, basic, water-soluble napins are one of the two major kinds of storage proteins synthesized in the seed during its maturation. The sequence is that of Napin-3 from Brassica napus (Rape).